Here is a 367-residue protein sequence, read N- to C-terminus: Probable butyrate kinase (367 aa).

It belongs to the acetokinase family.

Its subcellular location is the cytoplasm. The catalysed reaction is butanoate + ATP = butanoyl phosphate + ADP. In Bacillus cytotoxicus (strain DSM 22905 / CIP 110041 / 391-98 / NVH 391-98), this protein is Probable butyrate kinase.